The chain runs to 534 residues: Peptide chain release factor 3 (534 aa).

In terms of domain architecture, tr-type G spans 9 to 278 (SRRRTFAIIS…FFVEHAPPPQ (270 aa)). GTP is bound by residues 18–25 (SHPDAGKT), 86–90 (DTPGH), and 140–143 (NKLD).

It belongs to the TRAFAC class translation factor GTPase superfamily. Classic translation factor GTPase family. PrfC subfamily.

It is found in the cytoplasm. Increases the formation of ribosomal termination complexes and stimulates activities of RF-1 and RF-2. It binds guanine nucleotides and has strong preference for UGA stop codons. It may interact directly with the ribosome. The stimulation of RF-1 and RF-2 is significantly reduced by GTP and GDP, but not by GMP. This chain is Peptide chain release factor 3, found in Stenotrophomonas maltophilia (strain R551-3).